We begin with the raw amino-acid sequence, 94 residues long: Co-chaperonin GroES (94 aa).

Belongs to the GroES chaperonin family. In terms of assembly, heptamer of 7 subunits arranged in a ring. Interacts with the chaperonin GroEL.

It is found in the cytoplasm. In terms of biological role, together with the chaperonin GroEL, plays an essential role in assisting protein folding. The GroEL-GroES system forms a nano-cage that allows encapsulation of the non-native substrate proteins and provides a physical environment optimized to promote and accelerate protein folding. GroES binds to the apical surface of the GroEL ring, thereby capping the opening of the GroEL channel. In Latilactobacillus sakei subsp. sakei (strain 23K) (Lactobacillus sakei subsp. sakei), this protein is Co-chaperonin GroES.